We begin with the raw amino-acid sequence, 523 residues long: Melanoma-associated antigen E2 (523 aa).

2 consecutive MAGE domains span residues 88 to 288 (LEDR…YNKA) and 311 to 502 (MNDK…YREA).

This chain is Melanoma-associated antigen E2 (MAGEE2), found in Homo sapiens (Human).